Reading from the N-terminus, the 238-residue chain is Ribonuclease PH (238 aa).

Residues Arg86 and 124–126 (GTR) each bind phosphate.

Belongs to the RNase PH family. In terms of assembly, homohexameric ring arranged as a trimer of dimers.

The catalysed reaction is tRNA(n+1) + phosphate = tRNA(n) + a ribonucleoside 5'-diphosphate. Functionally, phosphorolytic 3'-5' exoribonuclease that plays an important role in tRNA 3'-end maturation. Removes nucleotide residues following the 3'-CCA terminus of tRNAs; can also add nucleotides to the ends of RNA molecules by using nucleoside diphosphates as substrates, but this may not be physiologically important. Probably plays a role in initiation of 16S rRNA degradation (leading to ribosome degradation) during starvation. This chain is Ribonuclease PH, found in Marinobacter nauticus (strain ATCC 700491 / DSM 11845 / VT8) (Marinobacter aquaeolei).